A 523-amino-acid polypeptide reads, in one-letter code: NAD(P) transhydrogenase subunit alpha (523 aa).

The Cytoplasmic portion of the chain corresponds to 1–411 (MKIGAPREIF…AEIATFRKQT (411 aa)). NAD(+)-binding positions include 127 to 130 (QKMD), Val177, 197 to 199 (DVR), and Gly229. A run of 2 helical transmembrane segments spans residues 412–432 (VSQV…GMYA) and 433–455 (PPSF…QVIW). Over 456-464 (NVSHSLHTP) the chain is Cytoplasmic. Residues 465 to 485 (LMAVTNAISGIVILGALLQIG) form a helical membrane-spanning segment. At 486–489 (SGNV) the chain is on the periplasmic side. A helical transmembrane segment spans residues 490–510 (LVVLLAAISVLIATINIVGGF). Over 511–523 (LVTRRMLAMFQKS) the chain is Cytoplasmic.

It belongs to the AlaDH/PNT family. In terms of assembly, heterodimer of an alpha (PntA) and a beta (PntB) chain.

Its subcellular location is the cell inner membrane. The enzyme catalyses NAD(+) + NADPH + H(+)(in) = NADH + NADP(+) + H(+)(out). Its function is as follows. The transhydrogenation between NADH and NADP is coupled to respiration and ATP hydrolysis and functions as a proton pump across the membrane. This is NAD(P) transhydrogenase subunit alpha from Cereibacter sphaeroides (Rhodobacter sphaeroides).